The sequence spans 119 residues: Large ribosomal subunit protein uL18 (119 aa).

It belongs to the universal ribosomal protein uL18 family. As to quaternary structure, part of the 50S ribosomal subunit; part of the 5S rRNA/L5/L18/L25 subcomplex. Contacts the 5S and 23S rRNAs.

Its function is as follows. This is one of the proteins that bind and probably mediate the attachment of the 5S RNA into the large ribosomal subunit, where it forms part of the central protuberance. This chain is Large ribosomal subunit protein uL18, found in Solibacter usitatus (strain Ellin6076).